The primary structure comprises 36 residues: Pancreatic polypeptide (36 aa).

Tyr-36 is modified (tyrosine amide).

This sequence belongs to the NPY family.

It is found in the secreted. Hormone secreted by pancreatic cells that acts as a regulator of pancreatic and gastrointestinal functions. The protein is Pancreatic polypeptide (PPY) of Struthio camelus (Common ostrich).